The sequence spans 285 residues: Eukaryotic translation initiation factor 2 subunit beta (285 aa).

The tract at residues 30-69 (DAAVNGKENGSGDDLFAGLKKKKKKSKSVSADAEAEKEPT) is disordered. Ser40 carries the phosphoserine modification. Thr69 bears the Phosphothreonine mark. Phosphoserine occurs at positions 80, 92, and 112. At Thr116 the chain carries Phosphothreonine. Ser118 bears the Phosphoserine mark. The C4-type zinc finger occupies 236–262 (CKTCKSINTELKREQSNRLFFMVCKSC).

The protein belongs to the eIF-2-beta/eIF-5 family. In terms of assembly, eukaryotic translation initiation factor 2 eIF2 is a heterotrimeric complex composed of an alpha, a beta and a gamma subunit. The factors eIF-1, eIF-2, eIF-3, TIF5/eIF-5 and methionyl-tRNAi form a multifactor complex (MFC) that may bind to the 40S ribosome. Interacts with GCD6. Interacts with GCD1. Interacts with TIF5/eIF-5. Interacts with CDC123.

It localises to the cytoplasm. The protein localises to the cytosol. Its function is as follows. Component of the eIF2 complex that functions in the early steps of protein synthesis by forming a ternary complex with GTP and initiator tRNA. This complex binds to a 40S ribosomal subunit, followed by mRNA binding to form a 43S pre-initiation complex (43S PIC). Junction of the 60S ribosomal subunit to form the 80S initiation complex is preceded by hydrolysis of the GTP bound to eIF2 and release of an eIF2-GDP binary complex. In order for eIF2 to recycle and catalyze another round of initiation, the GDP bound to eIF2 must exchange with GTP by way of a reaction catalyzed by eIF2B. The protein is Eukaryotic translation initiation factor 2 subunit beta (SUI3) of Saccharomyces cerevisiae (strain ATCC 204508 / S288c) (Baker's yeast).